Consider the following 447-residue polypeptide: uncharacterized protein (447 aa).

The segment at 39–76 (PQAAPYTRNNGMGECRRGHRQGHRAEVHDNRPADKVGQ) is disordered. Over residues 61-72 (HRAEVHDNRPAD) the composition is skewed to basic and acidic residues.

It belongs to the 3-oxoacid CoA-transferase subunit A family.

This is an uncharacterized protein from Archaeoglobus fulgidus (strain ATCC 49558 / DSM 4304 / JCM 9628 / NBRC 100126 / VC-16).